A 188-amino-acid chain; its full sequence is Large ribosomal subunit protein eL18 (188 aa).

Lys119 participates in a covalent cross-link: Glycyl lysine isopeptide (Lys-Gly) (interchain with G-Cter in SUMO2). A Phosphoserine modification is found at Ser130. The interval 150 to 188 is disordered; sequence RHFGKAPGTPHSHTKPYVRSKGRKFERARGRRASRGYKN. Thr158 is modified (phosphothreonine). Basic residues-rich tracts occupy residues 161–171 and 178–188; these read SHTKPYVRSKG and RGRRASRGYKN. Residue Lys164 forms a Glycyl lysine isopeptide (Lys-Gly) (interchain with G-Cter in SUMO2) linkage.

It belongs to the eukaryotic ribosomal protein eL18 family. As to quaternary structure, component of the large ribosomal subunit.

It localises to the cytoplasm. The protein resides in the cytosol. It is found in the rough endoplasmic reticulum. Component of the large ribosomal subunit. The ribosome is a large ribonucleoprotein complex responsible for the synthesis of proteins in the cell. The sequence is that of Large ribosomal subunit protein eL18 (RPL18) from Bos taurus (Bovine).